Consider the following 240-residue polypeptide: Poxin (240 aa).

The Proton donor role is filled by His-46. The active-site Shared with catalytic histidine of dimeric partner is Tyr-181. Lys-185 acts as the Proton acceptor; shared with catalytic histidine of dimeric partner in catalysis.

The protein belongs to the poxin family. In terms of assembly, homodimer.

It carries out the reaction 2',3'-cGAMP + H2O = Gp(2'-5')Ap(3') + H(+). In terms of biological role, nuclease that cleaves host 2',3'-cGAMP. In Lepidoptera (butterflies and moths), this protein is Poxin (P26).